The primary structure comprises 29 residues: Brevinin-2Ee (29 aa).

The cysteines at positions 23 and 29 are disulfide-linked.

This sequence belongs to the frog skin active peptide (FSAP) family. Brevinin subfamily. Expressed by the skin glands.

The protein localises to the secreted. Shows antibacterial activity against representative Gram-negative and Gram-positive bacterial species, and hemolytic activity. In Pelophylax lessonae (Pool frog), this protein is Brevinin-2Ee.